We begin with the raw amino-acid sequence, 305 residues long: Acetaldehyde dehydrogenase (305 aa).

Position 13–16 (13–16 (SGNI)) interacts with NAD(+). The active-site Acyl-thioester intermediate is cysteine 128. NAD(+) contacts are provided by residues 159 to 167 (SAGPGTRQN) and asparagine 278.

The protein belongs to the acetaldehyde dehydrogenase family.

It carries out the reaction acetaldehyde + NAD(+) + CoA = acetyl-CoA + NADH + H(+). The chain is Acetaldehyde dehydrogenase from Chloroflexus aurantiacus (strain ATCC 29366 / DSM 635 / J-10-fl).